Consider the following 607-residue polypeptide: Dolichyl-diphosphooligosaccharide--protein glycosyltransferase subunit 1 (607 aa).

Positions 1-24 are cleaved as a signal peptide; sequence MEVPTARLLLLLLLGAWAPAPESA. Residues 25 to 434 are Lumenal-facing; sequence SPEAPLLVNE…VVHYTFNKVL (410 aa). Lys187 is subject to N6-acetyllysine. Residue Asn299 is glycosylated (N-linked (GlcNAc...) asparagine). A helical membrane pass occupies residues 435–455; the sequence is MLQEPLLVVAAFYILFFTVII. The Cytoplasmic segment spans residues 456-607; that stretch reads YVRLDFSITK…TKIDHILDAL (152 aa). Lys538 bears the N6-acetyllysine; alternate mark. Residue Lys538 forms a Glycyl lysine isopeptide (Lys-Gly) (interchain with G-Cter in SUMO2); alternate linkage.

This sequence belongs to the OST1 family. In terms of assembly, component of the oligosaccharyltransferase (OST) complex. OST exists in two different complex forms which contain common core subunits RPN1, RPN2, OST48, OST4, DAD1 and TMEM258, either STT3A or STT3B as catalytic subunits, and form-specific accessory subunits. STT3A complex assembly occurs through the formation of 3 subcomplexes. Subcomplex 1 contains RPN1 and TMEM258, subcomplex 2 contains the STT3A-specific subunits STT3A, DC2/OSTC, and KCP2 as well as the core subunit OST4, and subcomplex 3 contains RPN2, DAD1, and OST48. The STT3A complex can form stable complexes with the Sec61 complex or with both the Sec61 and TRAP complexes. Interacts with TMEM35A/NACHO. Ubiquitinated by the ECS(ASB11) complex. In terms of processing, ufmylated by UFL1 in response to endoplasmic reticulum stress, promoting reticulophagy of endoplasmic reticulum sheets.

It is found in the endoplasmic reticulum membrane. The protein operates within protein modification; protein glycosylation. Its function is as follows. Subunit of the oligosaccharyl transferase (OST) complex that catalyzes the initial transfer of a defined glycan (Glc(3)Man(9)GlcNAc(2) in eukaryotes) from the lipid carrier dolichol-pyrophosphate to an asparagine residue within an Asn-X-Ser/Thr consensus motif in nascent polypeptide chains, the first step in protein N-glycosylation. N-glycosylation occurs cotranslationally and the complex associates with the Sec61 complex at the channel-forming translocon complex that mediates protein translocation across the endoplasmic reticulum (ER). All subunits are required for a maximal enzyme activity. The protein is Dolichyl-diphosphooligosaccharide--protein glycosyltransferase subunit 1 of Canis lupus familiaris (Dog).